Reading from the N-terminus, the 295-residue chain is Small ribosomal subunit protein uS2 (295 aa).

The disordered stretch occupies residues 273 to 295 (WAASSAPAAETLADPAADPSVKW). Residues 274–295 (AASSAPAAETLADPAADPSVKW) are compositionally biased toward low complexity.

Belongs to the universal ribosomal protein uS2 family. As to quaternary structure, component of the small ribosomal subunit. Mature ribosomes consist of a small (40S) and a large (60S) subunit. The 40S subunit contains about 33 different proteins and 1 molecule of RNA (18S). The 60S subunit contains about 49 different proteins and 3 molecules of RNA (25S, 5.8S and 5S). Interacts with RPS21.

It localises to the cytoplasm. Functionally, required for the assembly and/or stability of the 40S ribosomal subunit. Required for the processing of the 20S rRNA-precursor to mature 18S rRNA in a late step of the maturation of 40S ribosomal subunits. The polypeptide is Small ribosomal subunit protein uS2 (Paracoccidioides lutzii (strain ATCC MYA-826 / Pb01) (Paracoccidioides brasiliensis)).